We begin with the raw amino-acid sequence, 604 residues long: MQLFNLPLKVSFFLVLSYFSLLVSAASIPSSASVQLDSYNYDGSTFSGKIYVKNIAYSKKVTVIYADGSDNWNNNGNTIAASYSAPISGSNYEYWTFSASINGIKEFYIKYEVSGKTYYDNNNSANYQVSTSKPTTTTATATTTTAPSTSTTTPPSRSEPATFPTGNSTISSWIKKQEGISRFAMLRNINPPGSATGFIAASLSTAGPDYYYAWTRDAALTSNVIVYEYNTTLSGNKTILNVLKDYVTFSVKTQSTSTVCNCLGEPKFNPDASGYTGAWGRPQNDGPAERATTFILFADSYLTQTKDASYVTGTLKPAIFKDLDYVVNVWSNGCFDLWEEVNGVHFYTLMVMRKGLLLGADFAKRNGDSTRASTYSSTASTIANKISSFWVSSNNWIQVSQSVTGGVSKKGLDVSTLLAANLGSVDDGFFTPGSEKILATAVAVEDSFASLYPINKNLPSYLGNSIGRYPEDTYNGNGNSQGNSWFLAVTGYAELYYRAIKEWIGNGGVTVSSISLPFFKKFDSSATSGKKYTVGTSDFNNLAQNIALAADRFLSTVQLHAHNNGSLAEEFDRTTGLSTGARDLTWSHASLITASYAKAGAPAA.

Residues 1–25 form the signal peptide; the sequence is MQLFNLPLKVSFFLVLSYFSLLVSA. Residues 26-115 are adsorption to raw starch; sequence ASIPSSASVQ…EFYIKYEVSG (90 aa). The CBM21 domain occupies 26–130; that stretch reads ASIPSSASVQ…NNNSANYQVS (105 aa). Residues 116-604 form a starch degradation region; sequence KTYYDNNNSA…SYAKAGAPAA (489 aa). N-linked (GlcNAc...) asparagine glycosylation is present at asparagine 122. Residues 127–164 form a disordered region; the sequence is YQVSTSKPTTTTATATTTTAPSTSTTTPPSRSEPATFP. Positions 130 to 162 are enriched in low complexity; that stretch reads STSKPTTTTATATTTTAPSTSTTTPPSRSEPAT. 3 N-linked (GlcNAc...) asparagine glycosylation sites follow: asparagine 167, asparagine 230, and asparagine 236. Tryptophan 279 provides a ligand contact to substrate. Aspartate 336 acts as the Proton acceptor in catalysis. Catalysis depends on glutamate 339, which acts as the Proton donor. Residue asparagine 564 is glycosylated (N-linked (GlcNAc...) asparagine).

The protein belongs to the glycosyl hydrolase 15 family.

It carries out the reaction Hydrolysis of terminal (1-&gt;4)-linked alpha-D-glucose residues successively from non-reducing ends of the chains with release of beta-D-glucose.. The chain is Glucoamylase 1 from Rhizopus oryzae (Mucormycosis agent).